The chain runs to 490 residues: Bifunctional NAD(P)H-hydrate repair enzyme Nnr (490 aa).

The YjeF N-terminal domain maps to 1-204 (MKEIDELTIK…NIGHPVHLIN (204 aa)). The tract at residues 1-204 (MKEIDELTIK…NIGHPVHLIN (204 aa)) is NAD(P)H-hydrate epimerase. Positions 51–55 (NNGGD) are NADPHX 1; for epimerase activity. K(+) contacts are provided by Asn-52 and Asp-114. The segment at 118 to 124 (GTGLRGE) is NADPHX 1; for epimerase activity. (6S)-NADPHX-binding residues include Tyr-129 and Asp-147. Residue Ser-150 participates in K(+) binding. Positions 212-488 (TREMVRSLLP…RLIPEAIRRL (277 aa)) constitute a YjeF C-terminal domain. The segment at 212-490 (TREMVRSLLP…IPEAIRRLKE (279 aa)) is ADP-dependent (S)-NAD(P)H-hydrate dehydratase. Residue Gly-317 participates in (6S)-NADPHX binding. Residues 366–372 (HPGEMAR) form an NADPHX 2; for dehydratase activity region. Residues 402-406 (KSATT) and 421-430 (NTGLSKGGSG) each bind ADP. Asp-431 contributes to the (6S)-NADPHX binding site.

It in the N-terminal section; belongs to the NnrE/AIBP family. This sequence in the C-terminal section; belongs to the NnrD/CARKD family. K(+) is required as a cofactor.

The catalysed reaction is (6S)-NADHX + ADP = AMP + phosphate + NADH + H(+). It catalyses the reaction (6S)-NADPHX + ADP = AMP + phosphate + NADPH + H(+). It carries out the reaction (6R)-NADHX = (6S)-NADHX. The enzyme catalyses (6R)-NADPHX = (6S)-NADPHX. Bifunctional enzyme that catalyzes the epimerization of the S- and R-forms of NAD(P)HX and the dehydration of the S-form of NAD(P)HX at the expense of ADP, which is converted to AMP. This allows the repair of both epimers of NAD(P)HX, a damaged form of NAD(P)H that is a result of enzymatic or heat-dependent hydration. The protein is Bifunctional NAD(P)H-hydrate repair enzyme Nnr (nnr) of Thermotoga maritima (strain ATCC 43589 / DSM 3109 / JCM 10099 / NBRC 100826 / MSB8).